The primary structure comprises 315 residues: DNA-directed RNA polymerase subunit alpha (315 aa).

An alpha N-terminal domain (alpha-NTD) region spans residues 1 to 228 (MLEIEKPKIE…EHFKLFMTLT (228 aa)). The interval 245–315 (KEKVLEMTIE…LELGLKQSEE (71 aa)) is alpha C-terminal domain (alpha-CTD).

It belongs to the RNA polymerase alpha chain family. In terms of assembly, homodimer. The RNAP catalytic core consists of 2 alpha, 1 beta, 1 beta' and 1 omega subunit. When a sigma factor is associated with the core the holoenzyme is formed, which can initiate transcription.

It catalyses the reaction RNA(n) + a ribonucleoside 5'-triphosphate = RNA(n+1) + diphosphate. DNA-dependent RNA polymerase catalyzes the transcription of DNA into RNA using the four ribonucleoside triphosphates as substrates. This chain is DNA-directed RNA polymerase subunit alpha, found in Clostridium tetani (strain Massachusetts / E88).